The following is a 317-amino-acid chain: Serpentine receptor class delta-46 (317 aa).

7 helical membrane passes run 9–29 (FYII…YVII), 42–62 (IFLC…LLQA), 91–111 (YVLC…TMYV), 129–149 (VIIL…YLTI), 185–205 (QIVF…MFCL), 239–259 (AFLP…ALIT), and 269–289 (FVSV…FYTV).

This sequence belongs to the nematode receptor-like protein srd family.

The protein localises to the membrane. The polypeptide is Serpentine receptor class delta-46 (srd-46) (Caenorhabditis elegans).